A 472-amino-acid chain; its full sequence is MTIRTRFAPSPTGLLHVGNARAALFNFLFARHHGGEFLLRIEDTDKERSTQKAVDVIFDGLAWMGIEADAEPVFQSARQDRHTEVALELLAKGQAYKCFCTPEELTAMREKAMAEKRPPRYDGTWRDRDPSEAPEGAPYVVRLKAPREGETVIKDLVQGEVRVANAEMDDLILLRSDGTPTYLHAVVCDDHDMEITHVMRGDDHLTNTFRQAMIYRAMGWDLPHFAHLPLIHGPDGAKLSKRHGAQSVVDFREEGYLPEALCNYLLRLGWGHGDAEVLSREEQIKLFDLDGVGRSPSRMDYVKLAHLNGIWMRQADDERLTNDVMERLQGREGVVTDDKTRARILAMMPGLKERAKTLVELADNAAFAGFTLPLTFTPKAEKLLGEDGRRVLEGVGKELAALKDFTPEAIDATLRSYAEKHEIKLGSVAQPLRAAMTGSTTSPGIDLTLSALGQDEVLARIAAVLASGSANA.

Residues 9-19 (PSPTGLLHVGN) carry the 'HIGH' region motif. The segment covering 112-131 (AMAEKRPPRYDGTWRDRDPS) has biased composition (basic and acidic residues). Residues 112 to 133 (AMAEKRPPRYDGTWRDRDPSEA) are disordered. Residues 238–242 (KLSKR) carry the 'KMSKS' region motif. Lys-241 lines the ATP pocket.

Belongs to the class-I aminoacyl-tRNA synthetase family. Glutamate--tRNA ligase type 1 subfamily. Monomer.

Its subcellular location is the cytoplasm. The enzyme catalyses tRNA(Glu) + L-glutamate + ATP = L-glutamyl-tRNA(Glu) + AMP + diphosphate. In terms of biological role, catalyzes the attachment of glutamate to tRNA(Glu) in a two-step reaction: glutamate is first activated by ATP to form Glu-AMP and then transferred to the acceptor end of tRNA(Glu). This chain is Glutamate--tRNA ligase 1, found in Gluconobacter oxydans (strain 621H) (Gluconobacter suboxydans).